A 336-amino-acid chain; its full sequence is tRNA(Ile)-lysidine synthase (336 aa).

21–26 serves as a coordination point for ATP; sequence SGGLDS.

This sequence belongs to the tRNA(Ile)-lysidine synthase family.

It localises to the cytoplasm. The enzyme catalyses cytidine(34) in tRNA(Ile2) + L-lysine + ATP = lysidine(34) in tRNA(Ile2) + AMP + diphosphate + H(+). Ligates lysine onto the cytidine present at position 34 of the AUA codon-specific tRNA(Ile) that contains the anticodon CAU, in an ATP-dependent manner. Cytidine is converted to lysidine, thus changing the amino acid specificity of the tRNA from methionine to isoleucine. This Helicobacter pylori (strain ATCC 700392 / 26695) (Campylobacter pylori) protein is tRNA(Ile)-lysidine synthase.